Here is a 394-residue protein sequence, read N- to C-terminus: F-box/kelch-repeat protein At1g23390 (394 aa).

Positions 15 to 62 (EEESSIDGDILESILSYLPLLDLDSACQVSKSWNRAVFYSLRRLKTMP) constitute an F-box domain. 4 Kelch repeats span residues 65-111 (FVYN…RSSH), 155-204 (SLII…TWLS), 206-252 (AVSS…SIGF), and 321-369 (MVYV…VIVA).

This chain is F-box/kelch-repeat protein At1g23390, found in Arabidopsis thaliana (Mouse-ear cress).